The following is an 804-amino-acid chain: Exocyst complex component 6 (804 aa).

It belongs to the SEC15 family. As to quaternary structure, the exocyst complex is composed of EXOC1, EXOC2, EXOC3, EXOC4, EXOC5, EXOC6, EXOC7 and EXOC8. Interacts with CNTRL. Interacts with RAB11A in a GTP-dependent manner.

The protein localises to the cytoplasm. It localises to the perinuclear region. The protein resides in the cell projection. Its subcellular location is the growth cone. It is found in the midbody. The protein localises to the midbody ring. In terms of biological role, component of the exocyst complex involved in the docking of exocytic vesicles with fusion sites on the plasma membrane. Together with RAB11A, RAB3IP, RAB8A, PARD3, PRKCI, ANXA2, CDC42 and DNMBP promotes transcytosis of PODXL to the apical membrane initiation sites (AMIS), apical surface formation and lumenogenesis. This Homo sapiens (Human) protein is Exocyst complex component 6 (EXOC6).